Here is an 862-residue protein sequence, read N- to C-terminus: MQRAALFGGGDAQMAAGDLGELLVPYMPTIRVPKSGDRVYKTECAFSYDSPDSEGGLYVCMNTFLGFGREHIERHYRKTGQCVYLHLKRHVIEKVPGASGGALPKRRNAKLFLDLEANGDLSSDDFEYEDEAKLVIFPDHYEISLPNIEELPALVTIASDALLSAKSPYRKQDPDSWEEELQASKHAKSLVQLDNGVRIPPSGWKCSKCDLRENLWLNLTDGSVLCGKWFFDGSGGNGHAMEHYKETGYPLAVKLGTITPDGADVYSFDEEEPVLDPHIAKHLAHFGIDMLQMQVAENGLRDNDIKPRVSEWEVIQEAGVKLKPMYGPGYTGMKNLGNSCYLNAVMQAIFSIPEFQRAYVGNLPRIFDYSPLDPTQDFNTQMAKLGHGLLSGQYSKPPMKSELIEQVMKEEHKPQQNGISPQMFKAFISKDHTEFSSNRQQDAQEFFLHLINLVERNPVGSENPSDVFRFLVEERTQCCQSRKVRYTERVDYIMQLPVAMEAATNKDELIAYELKRREAEAARRAPPELVRAKIPFSACLQAFSEPTNVEDFWSSALQAKSAGVKTSRFASFPQYLVVQIKKFTFGLDWIPKKLDVSIDMPDFLDISHLRAMGLQPGEEELPDIAPPIIIPEDPKDRMMNNFVESLDIDESSVMQLAEMGFPLEACRKAVYYTGNLGAEVAFNWIIAHMEEPDFAEPLVVPVFGGAASSGVAGLGAVGLDNQPPEEMVSIIISMGFQRSLAIQALKATNNNLERALEWIFSHPELEEEDGEPALNVMDLENHTNANILAEARSEGPRIKDGPGRYELFGFISHMGTSTMSGHYVCHLKKEGRWVIYNDLRVCASERPPKDLGYIYFYHRIPS.

Residues 182–290 (QASKHAKSLV…KHLAHFGIDM (109 aa)) form a UBP-type; degenerate zinc finger. Residues cysteine 206, cysteine 209, cysteine 226, and histidine 239 each coordinate Zn(2+). One can recognise a USP domain in the interval 331–860 (TGMKNLGNSC…LGYIYFYHRI (530 aa)). Residue cysteine 340 is the Nucleophile of the active site. 2 UBA domains span residues 647–688 (DIDE…IIAH) and 722–762 (QPPE…IFSH). The active-site Proton acceptor is the histidine 822.

Belongs to the peptidase C19 family.

It catalyses the reaction Thiol-dependent hydrolysis of ester, thioester, amide, peptide and isopeptide bonds formed by the C-terminal Gly of ubiquitin (a 76-residue protein attached to proteins as an intracellular targeting signal).. Specifically inhibited by spautin-1 (specific and potent autophagy inhibitor-1), a derivative of MBCQ that binds to USP13 and inhibits deubiquitinase activity. Functionally, deubiquitinase that mediates deubiquitination of target proteins and is involved in various processes such as autophagy and endoplasmic reticulum-associated degradation (ERAD). The sequence is that of Ubiquitin carboxyl-terminal hydrolase 13 (USP13) from Gallus gallus (Chicken).